The chain runs to 319 residues: Ataxin-3 homolog (319 aa).

A Josephin domain is found at 8 to 179 (ISSIFFERQQ…NSEADDFITL (172 aa)). Cys-21 serves as the catalytic Nucleophile. His-118 acts as the Proton acceptor in catalysis. Asn-133 is a catalytic residue. UIM domains follow at residues 218-237 (QEDR…KESS) and 242-261 (SDED…DPNI). Residues 253–319 (MSLSQDPNIP…EKKSQNVPEE (67 aa)) are disordered. Polar residues predominate over residues 254–267 (SLSQDPNIPSTSAA). Positions 295-313 (QQRRDRAKFLEKLEEEKKS) are enriched in basic and acidic residues. Residues 297–300 (RRDR) are interaction with cdc-48.1 and cdc-48.2.

In terms of assembly, forms a complex composed of deubiquitinating enzyme atx-3, adapter ubxn-5 and cdc-48.1. Forms a complex composed of deubiquitinating enzyme atx-3, E4 ubiquitin-protein ligase ufd-2 and cdc-48.1. Interacts (via RRDR motif) with cdc-48.1 (via N-terminus) and cdc-48.2 (via N-terminus); the interaction with cdc-48.1 is not required for atx-3 enzymatic activity. Interacts (via C-terminus) with ubxn-5. May interact with ned-8.

The protein localises to the cytoplasm. Its subcellular location is the nucleus. The protein resides in the nucleolus. It catalyses the reaction Thiol-dependent hydrolysis of ester, thioester, amide, peptide and isopeptide bonds formed by the C-terminal Gly of ubiquitin (a 76-residue protein attached to proteins as an intracellular targeting signal).. Acts as a chain editing deubiquitinating enzyme that binds and cleaves 'Lys-48'-linked polyubiquitin chains, with a preference for chains containing four or more ubiquitin molecules thereby modulating protein degradation by the ubiquitin-proteasome pathway. Probably by regulating the IGF-1-insulin-like pathway, regulates lifespan. Regulates germline DNA double-strand-break repair and apoptosis in response to DNA damage by recruiting E4 ubiquitin-protein ligase ufd-2 to DNA repair foci. Interacts with key regulators of transcription and represses transcription. Acts as a histone-binding protein that regulates transcription. The sequence is that of Ataxin-3 homolog from Caenorhabditis briggsae.